The chain runs to 62 residues: Large ribosomal subunit protein bL28 (62 aa).

Belongs to the bacterial ribosomal protein bL28 family.

This Frankia casuarinae (strain DSM 45818 / CECT 9043 / HFP020203 / CcI3) protein is Large ribosomal subunit protein bL28.